Consider the following 43-residue polypeptide: Protein PsbN (43 aa).

Residues 5–27 (TLVXISISGSLVSFTGYALYTAF) traverse the membrane as a helical segment.

The protein belongs to the PsbN family.

It is found in the plastid. Its subcellular location is the chloroplast thylakoid membrane. In terms of biological role, may play a role in photosystem I and II biogenesis. In Calycanthus floridus (Eastern sweetshrub), this protein is Protein PsbN.